A 186-amino-acid chain; its full sequence is ATP synthase subunit b 3 (186 aa).

A helical transmembrane segment spans residues 5–25; sequence LLPALLTFSATPALAAKGPFF.

The protein belongs to the ATPase B chain family. As to quaternary structure, F-type ATPases have 2 components, F(1) - the catalytic core - and F(0) - the membrane proton channel. F(1) has five subunits: alpha(3), beta(3), gamma(1), delta(1), epsilon(1). F(0) has three main subunits: a(1), b(2) and c(10-14). The alpha and beta chains form an alternating ring which encloses part of the gamma chain. F(1) is attached to F(0) by a central stalk formed by the gamma and epsilon chains, while a peripheral stalk is formed by the delta and b chains.

It localises to the cell inner membrane. In terms of biological role, f(1)F(0) ATP synthase produces ATP from ADP in the presence of a proton or sodium gradient. F-type ATPases consist of two structural domains, F(1) containing the extramembraneous catalytic core and F(0) containing the membrane proton channel, linked together by a central stalk and a peripheral stalk. During catalysis, ATP synthesis in the catalytic domain of F(1) is coupled via a rotary mechanism of the central stalk subunits to proton translocation. Component of the F(0) channel, it forms part of the peripheral stalk, linking F(1) to F(0). This is ATP synthase subunit b 3 from Dinoroseobacter shibae (strain DSM 16493 / NCIMB 14021 / DFL 12).